A 347-amino-acid polypeptide reads, in one-letter code: Ribosomal RNA large subunit methyltransferase M (347 aa).

S-adenosyl-L-methionine is bound by residues serine 184, 217 to 220, aspartate 236, aspartate 256, and aspartate 272; that span reads APGG. Lysine 301 acts as the Proton acceptor in catalysis.

This sequence belongs to the class I-like SAM-binding methyltransferase superfamily. RNA methyltransferase RlmE family. RlmM subfamily. In terms of assembly, monomer.

It localises to the cytoplasm. The catalysed reaction is cytidine(2498) in 23S rRNA + S-adenosyl-L-methionine = 2'-O-methylcytidine(2498) in 23S rRNA + S-adenosyl-L-homocysteine + H(+). Catalyzes the 2'-O-methylation at nucleotide C2498 in 23S rRNA. The chain is Ribosomal RNA large subunit methyltransferase M from Xanthomonas oryzae pv. oryzae (strain KACC10331 / KXO85).